A 189-amino-acid chain; its full sequence is MTITFSAVILAGGQARRMGGVDKGLQLFRNQPLFEHIYQRLQPQIADVAINANRNQQRYAQSGLPVFSDDLAGFQGPLSGILTALQRAQSNFVLFVPCDCPFFPMDLFAKLKHAVISQHAQLAYAHDGEREHPTFCLVSTSLAPALAQYLATGERRMLTFMQQQHAIAVDFSATPDAFKNINNLVDLQT.

GTP-binding positions include 10–12, Lys23, Asn51, Asp69, and Asp99; that span reads LAG. Residue Asp99 coordinates Mg(2+).

The protein belongs to the MobA family. As to quaternary structure, monomer. The cofactor is Mg(2+).

Its subcellular location is the cytoplasm. It catalyses the reaction Mo-molybdopterin + GTP + H(+) = Mo-molybdopterin guanine dinucleotide + diphosphate. Functionally, transfers a GMP moiety from GTP to Mo-molybdopterin (Mo-MPT) cofactor (Moco or molybdenum cofactor) to form Mo-molybdopterin guanine dinucleotide (Mo-MGD) cofactor. The protein is Molybdenum cofactor guanylyltransferase of Pasteurella multocida (strain Pm70).